Here is a 382-residue protein sequence, read N- to C-terminus: Putative oxidoreductase C1F5.03c (382 aa).

The helical transmembrane segment at 7 to 27 (IVIVGGGITGVSCLYFLAHHP) threads the bilayer.

This sequence belongs to the TDA3 family.

It localises to the cytoplasm. The protein localises to the membrane. Putative oxidoreductase that negatively regulates the retrieval of cargo from late endosomes to the Golgi. This chain is Putative oxidoreductase C1F5.03c, found in Schizosaccharomyces pombe (strain 972 / ATCC 24843) (Fission yeast).